The primary structure comprises 549 residues: Speedy protein E3 (549 aa).

Positions 1-15 are enriched in low complexity; it reads MTSHQPQPQEEQSPQ. Disordered stretches follow at residues 1-74, 126-145, 188-218, 261-291, and 334-364; these read MTSH…EPEE, KREC…APEP, and SPPR…APEP. Composition is skewed to acidic residues over residues 58–74, 131–145, 204–218, 277–291, and 350–364; these read DESD…EPEE and DESD…APEP.

This sequence belongs to the Speedy/Ringo family. As to expression, predominantly expressed in testis and spleen.

This chain is Speedy protein E3, found in Homo sapiens (Human).